We begin with the raw amino-acid sequence, 287 residues long: DDRGK domain-containing protein 1 (287 aa).

Topologically, residues 1–5 (MDLIL) are lumenal. Residues 6–26 (LLGIAVALLVILVTLFFFTKG) form a helical membrane-spanning segment. At 27–287 (KGSQESGKYN…LINLVPVSAE (261 aa)) the chain is on the cytoplasmic side. Disordered regions lie at residues 28 to 102 (GSQE…KRAK) and 135 to 164 (KVEA…RQEH). A compositionally biased stretch (low complexity) spans 44 to 68 (AQAAPRRAQVVRNQRNRARVAAAPA). A compositionally biased stretch (basic and acidic residues) spans 85–102 (IPHADFNGEKMGAKKRAK).

This sequence belongs to the DDRGK1 family. Interacts with Atg9; the interaction is transient.

It is found in the endoplasmic reticulum membrane. Its function is as follows. Substrate adapter for ufmylation, the covalent attachment of the ubiquitin-like modifier UFM1 to substrate proteins. Required for ufmylation of Atg9; protects the nervous system during aging, possibly by stabilizing Atg9 and supporting its function. The protein is DDRGK domain-containing protein 1 of Culex quinquefasciatus (Southern house mosquito).